We begin with the raw amino-acid sequence, 102 residues long: MAIKHDDGTVLMRQEQKLKPPSMYQVLLLNDDYTPMEFVVLILQEYFSKDRETATQIMLMVHRDGKGICGVYPKDIASTKVELVLNHARKAGHPLQCVMEEV.

It belongs to the ClpS family. Binds to the N-terminal domain of the chaperone ClpA.

Involved in the modulation of the specificity of the ClpAP-mediated ATP-dependent protein degradation. This Janthinobacterium sp. (strain Marseille) (Minibacterium massiliensis) protein is ATP-dependent Clp protease adapter protein ClpS.